The following is a 378-amino-acid chain: Flap endonuclease 1 (378 aa).

The interval 1–105 (MGIKGLNSII…HELDKRTERR (105 aa)) is N-domain. A Mg(2+)-binding site is contributed by D34. Residues R47 and R71 each coordinate DNA. Residues D87, E156, E158, D177, and D179 each contribute to the Mg(2+) site. The segment at 120 to 251 (EIMKHERRLV…VTALKLIKEH (132 aa)) is I-domain. E156 is a DNA binding site. G229 and D231 together coordinate DNA. Residue D231 coordinates Mg(2+). The segment at 337–345 (VQGRLDSFF) is interaction with PCNA. Over residues 356-367 (AASARKAQAAKK) the composition is skewed to low complexity. The disordered stretch occupies residues 356-378 (AASARKAQAAKKTNQKGKVLKRR). The segment covering 368–378 (TNQKGKVLKRR) has biased composition (basic residues).

This sequence belongs to the XPG/RAD2 endonuclease family. FEN1 subfamily. In terms of assembly, interacts with PCNA. Three molecules of FEN1 bind to one PCNA trimer with each molecule binding to one PCNA monomer. PCNA stimulates the nuclease activity without altering cleavage specificity. Requires Mg(2+) as cofactor. Post-translationally, phosphorylated. Phosphorylation upon DNA damage induces relocalization to the nuclear plasma.

Its subcellular location is the nucleus. The protein localises to the nucleolus. The protein resides in the nucleoplasm. It localises to the mitochondrion. Structure-specific nuclease with 5'-flap endonuclease and 5'-3' exonuclease activities involved in DNA replication and repair. During DNA replication, cleaves the 5'-overhanging flap structure that is generated by displacement synthesis when DNA polymerase encounters the 5'-end of a downstream Okazaki fragment. It enters the flap from the 5'-end and then tracks to cleave the flap base, leaving a nick for ligation. Also involved in the long patch base excision repair (LP-BER) pathway, by cleaving within the apurinic/apyrimidinic (AP) site-terminated flap. Acts as a genome stabilization factor that prevents flaps from equilibrating into structures that lead to duplications and deletions. Also possesses 5'-3' exonuclease activity on nicked or gapped double-stranded DNA, and exhibits RNase H activity. Also involved in replication and repair of rDNA and in repairing mitochondrial DNA. This is Flap endonuclease 1 from Eremothecium gossypii (strain ATCC 10895 / CBS 109.51 / FGSC 9923 / NRRL Y-1056) (Yeast).